Consider the following 930-residue polypeptide: Endoplasmic reticulum aminopeptidase 1 (930 aa).

Residues 1 to 2 lie on the Cytoplasmic side of the membrane; it reads MP. The helical; Signal-anchor for type II membrane protein transmembrane segment at 3–23 threads the bilayer; the sequence is SLLSLVLTFLAVSSPSCCQNS. The Lumenal portion of the chain corresponds to 24-930; that stretch reads DTASPKASNG…WLQKERQELL (907 aa). N-linked (GlcNAc...) asparagine glycans are attached at residues asparagine 59 and asparagine 143. Substrate-binding positions include glutamate 172 and 306–310; that span reads GAMEN. Histidine 342 serves as a coordination point for Zn(2+). The active-site Proton acceptor is glutamate 343. Histidine 346 and glutamate 365 together coordinate Zn(2+). Cysteine 393 and cysteine 432 form a disulfide bridge. N-linked (GlcNAc...) asparagine glycosylation is found at asparagine 403 and asparagine 655. The cysteines at positions 725 and 732 are disulfide-linked. N-linked (GlcNAc...) asparagine glycans are attached at residues asparagine 749 and asparagine 890.

It belongs to the peptidase M1 family. In terms of assembly, monomer. May also exist as a heterodimer; with ERAP2. Interacts with RBMX. Zn(2+) is required as a cofactor. In terms of processing, N-glycosylated. As to expression, ubiquitous.

It localises to the endoplasmic reticulum membrane. Aminopeptidase that plays a central role in peptide trimming, a step required for the generation of most HLA class I-binding peptides. Peptide trimming is essential to customize longer precursor peptides to fit them to the correct length required for presentation on MHC class I molecules. Strongly prefers substrates 9-16 residues long. Rapidly degrades 13-mer to a 9-mer and then stops. Preferentially hydrolyzes the residue Leu and peptides with a hydrophobic C-terminus, while it has weak activity toward peptides with charged C-terminus. May play a role in the inactivation of peptide hormones. May be involved in the regulation of blood pressure through the inactivation of angiotensin II and/or the generation of bradykinin in the kidney. This Rattus norvegicus (Rat) protein is Endoplasmic reticulum aminopeptidase 1 (Erap1).